A 118-amino-acid chain; its full sequence is DNA mimic protein DMP12 (118 aa).

Belongs to the DMP12-like protein family. Monomer. Interacts with the dimeric form of the DNA-binding protein HU.

Functionally, acts as a DNA mimic. Interacts with the DNA-binding protein HU and partially prevents the binding of HU protein to DNA by occupying the DNA binding sites on the protein. However, the relatively weak affinity of DMP12 for HU suggests that it may not completely block the HU protein-DNA binding, and that DMP12 is more likely to act as a regulator than a competitive inhibitor. It protects HU protein from limited digestion by trypsin in a limited trypsin digestion assay, suggesting that it may serve to protect the HU protein and improve the stability of unbound HU protein. The polypeptide is DNA mimic protein DMP12 (Neisseria meningitidis serogroup B (strain ATCC BAA-335 / MC58)).